We begin with the raw amino-acid sequence, 293 residues long: Nitrogenase iron protein (293 aa).

10-17 (GKGGIGKS) contributes to the ATP binding site. A [4Fe-4S] cluster-binding site is contributed by Cys-98. Arg-101 bears the ADP-ribosylarginine; by dinitrogenase reductase ADP-ribosyltransferase mark. Position 133 (Cys-133) interacts with [4Fe-4S] cluster.

It belongs to the NifH/BchL/ChlL family. Homodimer. [4Fe-4S] cluster serves as cofactor. The reversible ADP-ribosylation of Arg-101 inactivates the nitrogenase reductase and regulates nitrogenase activity.

It catalyses the reaction N2 + 8 reduced [2Fe-2S]-[ferredoxin] + 16 ATP + 16 H2O = H2 + 8 oxidized [2Fe-2S]-[ferredoxin] + 2 NH4(+) + 16 ADP + 16 phosphate + 6 H(+). Functionally, the key enzymatic reactions in nitrogen fixation are catalyzed by the nitrogenase complex, which has 2 components: the iron protein and the molybdenum-iron protein. The protein is Nitrogenase iron protein of Klebsiella pneumoniae (strain 342).